A 479-amino-acid chain; its full sequence is Aspartyl/glutamyl-tRNA(Asn/Gln) amidotransferase subunit B (479 aa).

The protein belongs to the GatB/GatE family. GatB subfamily. Heterotrimer of A, B and C subunits.

It carries out the reaction L-glutamyl-tRNA(Gln) + L-glutamine + ATP + H2O = L-glutaminyl-tRNA(Gln) + L-glutamate + ADP + phosphate + H(+). The enzyme catalyses L-aspartyl-tRNA(Asn) + L-glutamine + ATP + H2O = L-asparaginyl-tRNA(Asn) + L-glutamate + ADP + phosphate + 2 H(+). Its function is as follows. Allows the formation of correctly charged Asn-tRNA(Asn) or Gln-tRNA(Gln) through the transamidation of misacylated Asp-tRNA(Asn) or Glu-tRNA(Gln) in organisms which lack either or both of asparaginyl-tRNA or glutaminyl-tRNA synthetases. The reaction takes place in the presence of glutamine and ATP through an activated phospho-Asp-tRNA(Asn) or phospho-Glu-tRNA(Gln). The polypeptide is Aspartyl/glutamyl-tRNA(Asn/Gln) amidotransferase subunit B (Streptococcus uberis (strain ATCC BAA-854 / 0140J)).